The following is a 398-amino-acid chain: Acetylornithine aminotransferase (398 aa).

Residue F129 coordinates pyridoxal 5'-phosphate. Position 132 (R132) interacts with N(2)-acetyl-L-ornithine. 214–217 (DEVQ) contacts pyridoxal 5'-phosphate. At K243 the chain carries N6-(pyridoxal phosphate)lysine. Position 271 (S271) interacts with N(2)-acetyl-L-ornithine. T272 is a pyridoxal 5'-phosphate binding site.

Belongs to the class-III pyridoxal-phosphate-dependent aminotransferase family. ArgD subfamily. As to quaternary structure, homodimer. Pyridoxal 5'-phosphate is required as a cofactor.

Its subcellular location is the cytoplasm. The catalysed reaction is N(2)-acetyl-L-ornithine + 2-oxoglutarate = N-acetyl-L-glutamate 5-semialdehyde + L-glutamate. It functions in the pathway amino-acid biosynthesis; L-arginine biosynthesis; N(2)-acetyl-L-ornithine from L-glutamate: step 4/4. This chain is Acetylornithine aminotransferase, found in Neisseria meningitidis serogroup B (strain ATCC BAA-335 / MC58).